The primary structure comprises 64 residues: Chassatide C7 (64 aa).

Positions 1–35 (VLVASLVMLEAQSSDTIQVPDWGKRLLMNHDSNRV) are cleaved as a propeptide — removed in mature form. Disulfide bonds link Cys-39–Cys-55, Cys-43–Cys-57, and Cys-48–Cys-62.

Expressed in fruit, pedicel, root and stem but not in leaf (at protein level).

Probably participates in a plant defense mechanism. Active against E.coli ATTC25922 but not against S.aureus ATCC 12600 or S.epidermidis ATCC 14990. Has cytotoxic and hemolytic activity. The protein is Chassatide C7 of Chassalia chartacea (Chassalia curviflora).